We begin with the raw amino-acid sequence, 885 residues long: Eukaryotic translation initiation factor 3 subunit C (885 aa).

The segment at 1–81 is disordered; the sequence is MSFFAKLQGS…SDSDDERQAV (81 aa). Over residues 9-28 the composition is skewed to low complexity; the sequence is GSDSESSSGSESEESILSGS. Residues 55-76 show a composition bias toward acidic residues; it reads EESESEEESSDEDEEEMSDSDD. Residues 624–797 enclose the PCI domain; it reads FHMHLNVELL…GVVIFHRVEQ (174 aa). Positions 822 to 885 are disordered; it reads LDVKLGNQGQ…TTMGRRVTAQ (64 aa). A compositionally biased stretch (gly residues) spans 855-872; it reads RGTYRGRGGRGGRGGFNQ.

This sequence belongs to the eIF-3 subunit C family. In terms of assembly, component of the eukaryotic translation initiation factor 3 (eIF-3) complex.

Its subcellular location is the cytoplasm. Functionally, component of the eukaryotic translation initiation factor 3 (eIF-3) complex, which is involved in protein synthesis of a specialized repertoire of mRNAs and, together with other initiation factors, stimulates binding of mRNA and methionyl-tRNAi to the 40S ribosome. The eIF-3 complex specifically targets and initiates translation of a subset of mRNAs involved in cell proliferation. The polypeptide is Eukaryotic translation initiation factor 3 subunit C (Cryptococcus neoformans var. neoformans serotype D (strain B-3501A) (Filobasidiella neoformans)).